The following is a 206-amino-acid chain: 2,3-bisphosphoglycerate-dependent phosphoglycerate mutase (206 aa).

Residues 9 to 16 (RHGQSEWN), 22 to 23 (TG), R61, 88 to 91 (ERDY), K99, 115 to 116 (RR), and 159 to 160 (GN) contribute to the substrate site. H10 serves as the catalytic Tele-phosphohistidine intermediate. E88 serves as the catalytic Proton donor/acceptor.

The protein belongs to the phosphoglycerate mutase family. BPG-dependent PGAM subfamily. In terms of assembly, homodimer.

It carries out the reaction (2R)-2-phosphoglycerate = (2R)-3-phosphoglycerate. It participates in carbohydrate degradation; glycolysis; pyruvate from D-glyceraldehyde 3-phosphate: step 3/5. Functionally, catalyzes the interconversion of 2-phosphoglycerate and 3-phosphoglycerate. The polypeptide is 2,3-bisphosphoglycerate-dependent phosphoglycerate mutase (Brucella melitensis biotype 2 (strain ATCC 23457)).